We begin with the raw amino-acid sequence, 242 residues long: MSHREAGQVAAIHFYATAPYPCSYLSGRQARSQVAIPAEAIDGGVYSQLVRLGFRRSGLYTYRPYCDSCQACIPVRLPVDQFRPNRTQRKVWRRGAGMSARWLPLAFDAEHYALYRWYQQTRHAGGGMSDDDAQQYSEFILKSGVDSHLAEFRLDGELKMVSLVDRLVDGLSAVYTFYDPEDSQSSLGVYNVLWQVEQARMLGLSYVYLGYWIADCRKMAYKSGYRPLQMLHGGRWQTMPEG.

This sequence belongs to the R-transferase family. Bpt subfamily.

Its subcellular location is the cytoplasm. The enzyme catalyses N-terminal L-glutamyl-[protein] + L-leucyl-tRNA(Leu) = N-terminal L-leucyl-L-glutamyl-[protein] + tRNA(Leu) + H(+). It carries out the reaction N-terminal L-aspartyl-[protein] + L-leucyl-tRNA(Leu) = N-terminal L-leucyl-L-aspartyl-[protein] + tRNA(Leu) + H(+). Functions in the N-end rule pathway of protein degradation where it conjugates Leu from its aminoacyl-tRNA to the N-termini of proteins containing an N-terminal aspartate or glutamate. This is Aspartate/glutamate leucyltransferase from Chromobacterium violaceum (strain ATCC 12472 / DSM 30191 / JCM 1249 / CCUG 213 / NBRC 12614 / NCIMB 9131 / NCTC 9757 / MK).